Reading from the N-terminus, the 256-residue chain is Imidazole glycerol phosphate synthase subunit HisF (256 aa).

Catalysis depends on residues Asp-12 and Asp-131.

It belongs to the HisA/HisF family. In terms of assembly, heterodimer of HisH and HisF.

Its subcellular location is the cytoplasm. It carries out the reaction 5-[(5-phospho-1-deoxy-D-ribulos-1-ylimino)methylamino]-1-(5-phospho-beta-D-ribosyl)imidazole-4-carboxamide + L-glutamine = D-erythro-1-(imidazol-4-yl)glycerol 3-phosphate + 5-amino-1-(5-phospho-beta-D-ribosyl)imidazole-4-carboxamide + L-glutamate + H(+). Its pathway is amino-acid biosynthesis; L-histidine biosynthesis; L-histidine from 5-phospho-alpha-D-ribose 1-diphosphate: step 5/9. IGPS catalyzes the conversion of PRFAR and glutamine to IGP, AICAR and glutamate. The HisF subunit catalyzes the cyclization activity that produces IGP and AICAR from PRFAR using the ammonia provided by the HisH subunit. This is Imidazole glycerol phosphate synthase subunit HisF from Bifidobacterium adolescentis (strain ATCC 15703 / DSM 20083 / NCTC 11814 / E194a).